A 138-amino-acid polypeptide reads, in one-letter code: Actophorin (138 aa).

Position 2 is a blocked amino end (Ser) (serine 2). The 132-residue stretch at 3–134 (GIAVSDDCVQ…SEDAVSERAK (132 aa)) folds into the ADF-H domain.

The protein belongs to the actin-binding proteins ADF family. Monomer.

It localises to the cytoplasm. In terms of biological role, forms a one to one complex with monomeric actin. Can regulate the pool available for polymerization. Severs actin filaments in a dose-dependent manner. The polypeptide is Actophorin (Acanthamoeba castellanii (Amoeba)).